The chain runs to 476 residues: Zinc finger CCCH domain-containing protein 6 (476 aa).

Low complexity predominate over residues 1–10 (MEQPHAAAAA). The disordered stretch occupies residues 1 to 57 (MEQPHAAAAAAGGGEGEGGASPDTGLEGPMWRMGLGGGGGGGGGGGGGDGDAAGRLP). Over residues 34 to 51 (GLGGGGGGGGGGGGGDGD) the composition is skewed to gly residues. 3 consecutive C3H1-type zinc fingers follow at residues 59–87 (RPGEEDCVYYLRTGACGFGDRCRYNHPRD), 108–136 (RAGQPICEYYMKTGTCKFGTNCKYHHPKQ), and 153–181 (RLGEKECSYYMKTGQCKFGTTCKFHHPEF). Residues 290–301 (SSTGQSSNNQQE) show a composition bias toward polar residues. Positions 290–309 (SSTGQSSNNQQEHGFPERPG) are disordered. 2 consecutive C3H1-type zinc fingers follow at residues 307 to 335 (RPGQPDCQYYMRTGDCKFGATCKYHHPRE) and 353 to 381 (RPGAQPCAYYAQNGYCRYGVACKYDHPMG). The disordered stretch occupies residues 456-476 (TMMRAQTNTTSGGSSSPGGGR).

It localises to the nucleus. This Oryza sativa subsp. japonica (Rice) protein is Zinc finger CCCH domain-containing protein 6.